A 186-amino-acid polypeptide reads, in one-letter code: NADH-quinone oxidoreductase subunit C (186 aa).

The segment at 166–186 (DSLTPWKGVGRPSDPFDGRKE) is disordered.

This sequence belongs to the complex I 30 kDa subunit family. As to quaternary structure, NDH-1 is composed of 14 different subunits. Subunits NuoB, C, D, E, F, and G constitute the peripheral sector of the complex.

The protein resides in the cell inner membrane. It catalyses the reaction a quinone + NADH + 5 H(+)(in) = a quinol + NAD(+) + 4 H(+)(out). Its function is as follows. NDH-1 shuttles electrons from NADH, via FMN and iron-sulfur (Fe-S) centers, to quinones in the respiratory chain. The immediate electron acceptor for the enzyme in this species is believed to be ubiquinone. Couples the redox reaction to proton translocation (for every two electrons transferred, four hydrogen ions are translocated across the cytoplasmic membrane), and thus conserves the redox energy in a proton gradient. The chain is NADH-quinone oxidoreductase subunit C from Neorickettsia sennetsu (strain ATCC VR-367 / Miyayama) (Ehrlichia sennetsu).